Consider the following 152-residue polypeptide: Protein FERTILITY RESTORER RF2, mitochondrial (152 aa).

A mitochondrion-targeting transit peptide spans 1 to 52 (MSTLVTCSLPGAVTTHASTRRFGGSQFQTSQASCISFKREVSAKAVLRSVRC). The segment covering 52-69 (CNATQTQSAQRKSSTATV) has biased composition (polar residues). Residues 52-99 (CNATQTQSAQRKSSTATVKRSDPKGKIQGPKLDDGSGGFPPFRFGKGG) are disordered.

The protein resides in the mitochondrion. Functionally, restores fertility in rice varieties with LD-type cytoplasmic male sterility (CMS). CMS is caused by genetic incompatibility between nuclei and mitochondria within male reproductive organs. Corresponds to the functional allele of RF2, which is dependent of the presence of Ile-78 in the japonica cultivars Fukuyama and Owarihatamochi (AC F1SZ42), and indica cultivar Kasalath (AC F1SZ41). Non-functional RF2 alleles are found in japonica cultivars Taichung 65 and Nipponbare (AC F1SZ44), where Ile-78 is replaced by Thr-78. In Oryza sativa subsp. japonica (Rice), this protein is Protein FERTILITY RESTORER RF2, mitochondrial.